Here is a 368-residue protein sequence, read N- to C-terminus: D-alanine--D-alanine ligase (368 aa).

An ATP-grasp domain is found at Lys-151 to Asp-358. Lys-179–Glu-234 provides a ligand contact to ATP. Mg(2+) is bound by residues Asp-313, Glu-325, and Asn-327.

It belongs to the D-alanine--D-alanine ligase family. Mg(2+) serves as cofactor. Mn(2+) is required as a cofactor.

Its subcellular location is the cytoplasm. It catalyses the reaction 2 D-alanine + ATP = D-alanyl-D-alanine + ADP + phosphate + H(+). The protein operates within cell wall biogenesis; peptidoglycan biosynthesis. Functionally, cell wall formation. This is D-alanine--D-alanine ligase from Rhodococcus jostii (strain RHA1).